We begin with the raw amino-acid sequence, 279 residues long: Thioredoxin-like 1-2, chloroplastic (279 aa).

A chloroplast-targeting transit peptide spans 1–34; that stretch reads MAATAAQAVAVKGSVAVPPCGSRGRRRGAVASVR. The Thioredoxin domain occupies 61–203; sequence PRRSRPVPRN…FRDALAKHKP (143 aa). Active-site nucleophile residues include Cys126 and Cys129. Cysteines 126 and 129 form a disulfide. The segment at 242–279 is disordered; the sequence is GDAAAAQELDRGSTKLSPPAKPLVKQGSEERSLVSSGR.

This sequence belongs to the thioredoxin family.

It localises to the plastid. It is found in the chloroplast. Probable thiol-disulfide oxidoreductase that may participate in various redox reactions. This Oryza sativa subsp. japonica (Rice) protein is Thioredoxin-like 1-2, chloroplastic.